We begin with the raw amino-acid sequence, 620 residues long: Chaperone protein HscA homolog (620 aa).

Belongs to the heat shock protein 70 family.

Functionally, chaperone involved in the maturation of iron-sulfur cluster-containing proteins. Has a low intrinsic ATPase activity which is markedly stimulated by HscB. The sequence is that of Chaperone protein HscA homolog from Pseudomonas syringae pv. tomato (strain ATCC BAA-871 / DC3000).